The following is a 313-amino-acid chain: Fe-S cluster assembly protein dre2 (313 aa).

2 disordered regions span residues 1–25 (MSIT…SQKR) and 151–187 (GRKK…AQNN). The interval 20 to 145 (NGSQKRNLLL…FEKPVQEAAV (126 aa)) is N-terminal SAM-like domain. Residues 146–203 (PLKLGGRKKKDKTNGVNGVQNGVATNGASTNGVGMFDPAQNNDDELIDEDALLSDDDL) form a linker region. The span at 159 to 177 (NGVNGVQNGVATNGASTNG) shows a compositional bias: polar residues. Residues cysteine 213, cysteine 225, cysteine 228, and cysteine 230 each coordinate [2Fe-2S] cluster. The segment at 213–230 (CVPETAKKRRRPCKDCTC) is fe-S binding site A. Residues cysteine 276, cysteine 279, cysteine 287, and cysteine 290 each coordinate [4Fe-4S] cluster. 2 short sequence motifs (cx2C motif) span residues 276–279 (CNSC) and 287–290 (CSSC). The segment at 276 to 290 (CNSCSLGDAFRCSSC) is fe-S binding site B.

Belongs to the anamorsin family. As to quaternary structure, monomer. Interacts with tah18. Interacts with mia40. Requires [2Fe-2S] cluster as cofactor. [4Fe-4S] cluster is required as a cofactor.

Its subcellular location is the cytoplasm. It is found in the mitochondrion intermembrane space. Its function is as follows. Component of the cytosolic iron-sulfur (Fe-S) protein assembly (CIA) machinery required for the maturation of extramitochondrial Fe-S proteins. Part of an electron transfer chain functioning in an early step of cytosolic Fe-S biogenesis, facilitating the de novo assembly of a [4Fe-4S] cluster on the scaffold complex cfd1-nbp35. Electrons are transferred to dre2 from NADPH via the FAD- and FMN-containing protein tah18. Tah18-dre2 are also required for the assembly of the diferric tyrosyl radical cofactor of ribonucleotide reductase (RNR), probably by providing electrons for reduction during radical cofactor maturation in the catalytic small subunit rnr2. This chain is Fe-S cluster assembly protein dre2, found in Aspergillus flavus (strain ATCC 200026 / FGSC A1120 / IAM 13836 / NRRL 3357 / JCM 12722 / SRRC 167).